The chain runs to 432 residues: MQYLVVSFSHKNTDIVTREKLALSDDNKREDVATTLLQNPVINEAIILSTCNRIEIILSVKDPFSATEAVLKKLSEVSGINYEELEGRADIYEDNGAIHHVFSVASGLDSLVVGETQITGQIKDAYKEAYEKGWCGQKLGRVMHYAFKCSKEVRSSTDITRSPVSVASAAVSMAKEKLGNLGGMSALVVGAGEMGRLAAKHLISHGCNVILVGRDLEKTKTVAQEIDPDIRVEHVSNLQKLINSYRLLFSATSSKNPVITKDMVKEQSFDRYWFDMAVPRDIEEIYVARIHYFAVDDLKEIVNKNMAFREEQARNAYKIVGHHVNEFFKWLQTLEIDPIIKEIRKRAKDSALAELQKAIKKGYIPKEYEKSIEKLLHNAFNRFLHDPTKQLKAIADEPRADTIVEAIKFFFEIEEEVGLNRYKCEYYMNLRS.

Substrate is bound by residues 50 to 53 (TCNR), serine 110, 115 to 117 (ETQ), and glutamine 121. Cysteine 51 serves as the catalytic Nucleophile. Residue 190-195 (GAGEMG) participates in NADP(+) binding.

The protein belongs to the glutamyl-tRNA reductase family. Homodimer.

The catalysed reaction is (S)-4-amino-5-oxopentanoate + tRNA(Glu) + NADP(+) = L-glutamyl-tRNA(Glu) + NADPH + H(+). Its pathway is porphyrin-containing compound metabolism; protoporphyrin-IX biosynthesis; 5-aminolevulinate from L-glutamyl-tRNA(Glu): step 1/2. Functionally, catalyzes the NADPH-dependent reduction of glutamyl-tRNA(Glu) to glutamate 1-semialdehyde (GSA). In Nitratiruptor sp. (strain SB155-2), this protein is Glutamyl-tRNA reductase.